Consider the following 183-residue polypeptide: uncharacterized protein (183 aa).

This sequence belongs to the asfivirus S183L family.

This is an uncharacterized protein from Ornithodoros (relapsing fever ticks).